Here is a 315-residue protein sequence, read N- to C-terminus: 4-hydroxy-3-methylbut-2-enyl diphosphate reductase (315 aa).

Cys12 is a binding site for [4Fe-4S] cluster. Residues His41 and His74 each coordinate (2E)-4-hydroxy-3-methylbut-2-enyl diphosphate. The dimethylallyl diphosphate site is built by His41 and His74. The isopentenyl diphosphate site is built by His41 and His74. Residue Cys96 coordinates [4Fe-4S] cluster. A (2E)-4-hydroxy-3-methylbut-2-enyl diphosphate-binding site is contributed by His124. Residue His124 participates in dimethylallyl diphosphate binding. An isopentenyl diphosphate-binding site is contributed by His124. Glu126 functions as the Proton donor in the catalytic mechanism. Thr168 serves as a coordination point for (2E)-4-hydroxy-3-methylbut-2-enyl diphosphate. Cys198 contacts [4Fe-4S] cluster. The (2E)-4-hydroxy-3-methylbut-2-enyl diphosphate site is built by Ser226, Ser227, Asn228, and Ser270. Residues Ser226, Ser227, Asn228, and Ser270 each contribute to the dimethylallyl diphosphate site. The isopentenyl diphosphate site is built by Ser226, Ser227, Asn228, and Ser270.

This sequence belongs to the IspH family. Requires [4Fe-4S] cluster as cofactor.

The catalysed reaction is isopentenyl diphosphate + 2 oxidized [2Fe-2S]-[ferredoxin] + H2O = (2E)-4-hydroxy-3-methylbut-2-enyl diphosphate + 2 reduced [2Fe-2S]-[ferredoxin] + 2 H(+). It catalyses the reaction dimethylallyl diphosphate + 2 oxidized [2Fe-2S]-[ferredoxin] + H2O = (2E)-4-hydroxy-3-methylbut-2-enyl diphosphate + 2 reduced [2Fe-2S]-[ferredoxin] + 2 H(+). The protein operates within isoprenoid biosynthesis; dimethylallyl diphosphate biosynthesis; dimethylallyl diphosphate from (2E)-4-hydroxy-3-methylbutenyl diphosphate: step 1/1. It participates in isoprenoid biosynthesis; isopentenyl diphosphate biosynthesis via DXP pathway; isopentenyl diphosphate from 1-deoxy-D-xylulose 5-phosphate: step 6/6. Catalyzes the conversion of 1-hydroxy-2-methyl-2-(E)-butenyl 4-diphosphate (HMBPP) into a mixture of isopentenyl diphosphate (IPP) and dimethylallyl diphosphate (DMAPP). Acts in the terminal step of the DOXP/MEP pathway for isoprenoid precursor biosynthesis. The polypeptide is 4-hydroxy-3-methylbut-2-enyl diphosphate reductase (Pseudomonas putida (strain GB-1)).